Reading from the N-terminus, the 392-residue chain is Phospho-N-acetylmuramoyl-pentapeptide-transferase (392 aa).

Transmembrane regions (helical) follow at residues 28 to 48 (IIAAGVFALLLGMLIGPKLIA), 76 to 96 (TMGGALILLCIAAGTLLFADL), 101 to 121 (VWVMLLLTLGYGFIGFLDDWL), 137 to 157 (MVLQTFFFLVAVFGLLTTWTL), 181 to 201 (WFNPDLGWFYVFFAWIVVVGT), 213 to 233 (GLAIVPTIVSAITFAVLCYVA), 268 to 288 (GAELAVFCAAIVGAGISFLWF), 295 to 315 (VFMGDIGSLALGGALGGLAML), 320 to 340 (VVSAIIHGIFFAEILSVMIQV), and 369 to 389 (KIIVRFWIVSILCGGVALLSL).

It belongs to the glycosyltransferase 4 family. MraY subfamily. Mg(2+) serves as cofactor.

Its subcellular location is the cell inner membrane. The enzyme catalyses UDP-N-acetyl-alpha-D-muramoyl-L-alanyl-gamma-D-glutamyl-meso-2,6-diaminopimeloyl-D-alanyl-D-alanine + di-trans,octa-cis-undecaprenyl phosphate = di-trans,octa-cis-undecaprenyl diphospho-N-acetyl-alpha-D-muramoyl-L-alanyl-D-glutamyl-meso-2,6-diaminopimeloyl-D-alanyl-D-alanine + UMP. Its pathway is cell wall biogenesis; peptidoglycan biosynthesis. Functionally, catalyzes the initial step of the lipid cycle reactions in the biosynthesis of the cell wall peptidoglycan: transfers peptidoglycan precursor phospho-MurNAc-pentapeptide from UDP-MurNAc-pentapeptide onto the lipid carrier undecaprenyl phosphate, yielding undecaprenyl-pyrophosphoryl-MurNAc-pentapeptide, known as lipid I. In Myxococcus xanthus (strain DK1622), this protein is Phospho-N-acetylmuramoyl-pentapeptide-transferase.